Here is a 213-residue protein sequence, read N- to C-terminus: Uridine kinase (213 aa).

An ATP-binding site is contributed by 15–22 (GASASGKS).

The protein belongs to the uridine kinase family.

It localises to the cytoplasm. It catalyses the reaction uridine + ATP = UMP + ADP + H(+). The enzyme catalyses cytidine + ATP = CMP + ADP + H(+). The protein operates within pyrimidine metabolism; CTP biosynthesis via salvage pathway; CTP from cytidine: step 1/3. Its pathway is pyrimidine metabolism; UMP biosynthesis via salvage pathway; UMP from uridine: step 1/1. This Yersinia pseudotuberculosis serotype O:1b (strain IP 31758) protein is Uridine kinase.